Consider the following 436-residue polypeptide: Glutamyl-tRNA reductase (436 aa).

Residues 49 to 52 (TCNR), Ser109, 114 to 116 (EGQ), and Gln120 contribute to the substrate site. Cys50 functions as the Nucleophile in the catalytic mechanism. 198–203 (GAGRMS) lines the NADP(+) pocket.

This sequence belongs to the glutamyl-tRNA reductase family. As to quaternary structure, homodimer.

It carries out the reaction (S)-4-amino-5-oxopentanoate + tRNA(Glu) + NADP(+) = L-glutamyl-tRNA(Glu) + NADPH + H(+). The protein operates within porphyrin-containing compound metabolism; protoporphyrin-IX biosynthesis; 5-aminolevulinate from L-glutamyl-tRNA(Glu): step 1/2. It participates in porphyrin-containing compound metabolism; chlorophyll biosynthesis. In terms of biological role, catalyzes the NADPH-dependent reduction of glutamyl-tRNA(Glu) to glutamate 1-semialdehyde (GSA). This Prochlorococcus marinus (strain MIT 9312) protein is Glutamyl-tRNA reductase.